The chain runs to 114 residues: FK506-binding protein 1 (114 aa).

The PPIase FKBP-type domain occupies 26–114; sequence GDLVTIHYTG…IFEVELLKVN (89 aa).

This sequence belongs to the FKBP-type PPIase family. FKBP1 subfamily.

The protein localises to the cytoplasm. It catalyses the reaction [protein]-peptidylproline (omega=180) = [protein]-peptidylproline (omega=0). Its activity is regulated as follows. Inhibited by both FK506 and rapamycin. Its function is as follows. PPIases accelerate the folding of proteins. It catalyzes the cis-trans isomerization of proline imidic peptide bonds in oligopeptides. In Eremothecium gossypii (strain ATCC 10895 / CBS 109.51 / FGSC 9923 / NRRL Y-1056) (Yeast), this protein is FK506-binding protein 1 (FPR1).